The chain runs to 918 residues: Pre-pro-metalloprotease PrtV (918 aa).

The signal sequence occupies residues 1–23; that stretch reads MKTIKKTLLAAAIASFFSSGLYA. Positions 24-105 are excised as a propeptide; the sequence is QTPIDLGVVN…QKGPHKARVF (82 aa). H330 contributes to the Zn(2+) binding site. E331 is a catalytic residue. H334 serves as a coordination point for Zn(2+). I757, D782, D821, and D825 together coordinate Ca(2+). 2 consecutive PKD domains span residues 758–835 and 855–918; these read APVA…TIKV and VTMW…KVKL. Residues 835–918 constitute a propeptide that is removed on maturation; that stretch reads VDTPNALPQA…VTTITIKVKL (84 aa).

This sequence belongs to the peptidase M6 family. It depends on Zn(2+) as a cofactor. In terms of processing, prtV is expressed as an inactive, multidomain, 102 kDa pre-pro-metalloprotease. To form a catalytically active protease, PrtV is first secreted, and then it undergoes N- and C-terminal cleavages during envelope translocation to yield a 81 kDa pro-metalloprotease. Outside the cell, the 81 kDa pro-metalloprotease undergoes an auto-cleavage. The two major products of autoproteolysis (37 kDa and 18 kDa) together form the so called 55 kDa active complex.

It localises to the secreted. Its activity is regulated as follows. Calcium plays an important structural role, providing stability to this protein in the cytoplasm. Outside the cell, the decrease of the calcium concentration triggers the autoproteolysis. PrtV activity is increased by 25 mM of Sr(2+) or Mg(2+) and to some extent by Ba(2+); however, Ba(2+) inhibits PrtV at higher concentrations. Completely inhibited by EDTA and 1,10-phenanthroline. Functionally, metalloprotease that exhibits a cytotoxic effect leading to cell death. In host tissues, it could play a role in pathogenesis by modulating the stability of the extracellular matrix components such as fibronectin and fibrinogen. Also able to cleave plasminogen. The chain is Pre-pro-metalloprotease PrtV from Vibrio cholerae serotype O1 (strain ATCC 39315 / El Tor Inaba N16961).